The chain runs to 431 residues: Glucose-1-phosphate adenylyltransferase (431 aa).

Lys-39 contributes to the beta-D-fructose 1,6-bisphosphate binding site. AMP is bound by residues Arg-40, His-46, and Arg-52. Tyr-114 is an alpha-D-glucose 1-phosphate binding site. AMP is bound at residue Arg-130. Alpha-D-glucose 1-phosphate contacts are provided by residues Gly-179, 194-195, and Ser-212; that span reads EK. 2 residues coordinate AMP: Glu-370 and Arg-386. Beta-D-fructose 1,6-bisphosphate contacts are provided by residues 419-423 and 429-431; these read REMLR and QER.

This sequence belongs to the bacterial/plant glucose-1-phosphate adenylyltransferase family. Homotetramer.

It carries out the reaction alpha-D-glucose 1-phosphate + ATP + H(+) = ADP-alpha-D-glucose + diphosphate. The protein operates within glycan biosynthesis; glycogen biosynthesis. Allosterically activated by fructose-1,6-bisphosphate (F16BP) and inhibited by AMP. Its function is as follows. Involved in the biosynthesis of ADP-glucose, a building block required for the elongation reactions to produce glycogen. Catalyzes the reaction between ATP and alpha-D-glucose 1-phosphate (G1P) to produce pyrophosphate and ADP-Glc. The sequence is that of Glucose-1-phosphate adenylyltransferase from Escherichia coli O7:K1 (strain IAI39 / ExPEC).